A 40-amino-acid chain; its full sequence is Ostricacin-3 (40 aa).

Intrachain disulfides connect Cys8–Cys36, Cys15–Cys30, and Cys20–Cys37.

Its subcellular location is the secreted. Functionally, has antibacterial activity against the Gram-positive bacterium S.aureus 1056 MRSA (MIC=2.78 ug/ml) and the Gram-negative bacterium E.coli O157:H7 (MIC=2.41 ug/ml). Does not have antifungal activity against the yeast C.albicans 3153A. The sequence is that of Ostricacin-3 from Struthio camelus (Common ostrich).